The following is a 190-amino-acid chain: Adenine phosphoribosyltransferase (190 aa).

It belongs to the purine/pyrimidine phosphoribosyltransferase family. Homodimer.

The protein resides in the cytoplasm. The enzyme catalyses AMP + diphosphate = 5-phospho-alpha-D-ribose 1-diphosphate + adenine. It functions in the pathway purine metabolism; AMP biosynthesis via salvage pathway; AMP from adenine: step 1/1. Functionally, catalyzes a salvage reaction resulting in the formation of AMP, that is energically less costly than de novo synthesis. This is Adenine phosphoribosyltransferase from Treponema denticola (strain ATCC 35405 / DSM 14222 / CIP 103919 / JCM 8153 / KCTC 15104).